A 213-amino-acid chain; its full sequence is Large ribosomal subunit protein mL67 (213 aa).

The protein belongs to the mitochondrion-specific ribosomal protein mL67 family.

Its subcellular location is the nucleus. The protein localises to the mitochondrion. Its function is as follows. Transcription factor involved in regulation of RNA polymerase II-dependent transcription. Also involved in regulation of mitochondrial DNA recombination, maintenance and repair, and generation of homoplasmic cells. This is Large ribosomal subunit protein mL67 (MHR1) from Eremothecium gossypii (strain ATCC 10895 / CBS 109.51 / FGSC 9923 / NRRL Y-1056) (Yeast).